The chain runs to 114 residues: PDZK1-interacting protein 1 (114 aa).

Topologically, residues 1-28 (MSALSLLILGLLTAVPPASCQQGLGNLQ) are extracellular. Residues 29–51 (PWMQGLIAVAVFLVLVAIAFAVN) traverse the membrane as a helical segment. At 52 to 114 (HFWCQEEPEP…EEGKVRSTPM (63 aa)) the chain is on the cytoplasmic side. At serine 85 the chain carries Phosphoserine. Positions 94 to 114 (EHENAYENVPEEEGKVRSTPM) are disordered. The span at 105 to 114 (EEGKVRSTPM) shows a compositional bias: basic and acidic residues.

This sequence belongs to the PDZK1-interacting protein 1/SMIM24 family. In terms of assembly, forms a heterodimer (via N-terminal transmembrane helix) with SLC5A2/SGLT2 (via TM13); this interaction enhances SLC5A2 transporter activity. Interacts with PDZK1.

The protein localises to the apical cell membrane. Auxiliary protein of electrogenic Na(+)-coupled sugar symporter SLC5A2/SGLT2 and SLC5A1/SGLT1. Essential for the transporter activity of SLC5A2/SGLT2 but not SLC5A1/SGLT1. The polypeptide is PDZK1-interacting protein 1 (Homo sapiens (Human)).